Reading from the N-terminus, the 556-residue chain is Urocanate hydratase (556 aa).

NAD(+) contacts are provided by residues 52-53 (GG), Gln130, 176-178 (GMG), Glu196, Arg201, 242-243 (NA), 263-267 (QTSAH), 273-274 (YL), and Tyr322. Cys410 is an active-site residue. Position 492 (Gly492) interacts with NAD(+).

Belongs to the urocanase family. NAD(+) is required as a cofactor.

Its subcellular location is the cytoplasm. The catalysed reaction is 4-imidazolone-5-propanoate = trans-urocanate + H2O. It participates in amino-acid degradation; L-histidine degradation into L-glutamate; N-formimidoyl-L-glutamate from L-histidine: step 2/3. Its function is as follows. Catalyzes the conversion of urocanate to 4-imidazolone-5-propionate. This Shewanella sediminis (strain HAW-EB3) protein is Urocanate hydratase.